Consider the following 227-residue polypeptide: Lysosomal-associated transmembrane protein 4B (227 aa).

Transmembrane regions (helical) follow at residues I26–A46, M72–G92, W100–I120, and C153–I173. Residues P205 to P222 form a required for NEDD4 interaction region.

The protein belongs to the LAPTM4/LAPTM5 transporter family. As to quaternary structure, homooligomer; upon reaching the lysosomes. Interacts with MCOLN1. Interacts with NEDD4; may play a role in the lysosomal sorting of LAPTM4B; enhances HGS association with NEDD4; mediates inhibition of EGFR degradation. Interacts with PIP5K1C; promotes SNX5 association with LAPTM4B; kinase activity of PIP5K1C is required; interaction is regulated by phosphatidylinositol 4,5-bisphosphate generated by PIP5K1C. Interacts with HGS; promotes HGS ubiquitination. Interacts with SNX5. Interacts with SLC3A2 and SLC7A5; recruits SLC3A2 and SLC7A5 to lysosomes to promote leucine uptake into these organelles and is required for mTORC1 activation. Interacts with LRRC32; decreases TGFB1 production in regulatory T cells. Interacts with BECN1; competes with EGFR for LAPTM4B binding; regulates EGFR activity. Interacts with EGFR; positively correlates with EGFR activation. Undergoes proteolytic cleavage following delivery to the lysosomes. In terms of processing, ubiquitinated by NEDD4.

It is found in the endomembrane system. It localises to the late endosome membrane. The protein resides in the cell membrane. The protein localises to the cell projection. Its subcellular location is the lysosome membrane. It is found in the endosome membrane. It localises to the endosome. The protein resides in the multivesicular body membrane. The protein localises to the multivesicular body lumen. Functionally, required for optimal lysosomal function. Blocks EGF-stimulated EGFR intraluminal sorting and degradation. Conversely by binding with the phosphatidylinositol 4,5-bisphosphate, regulates its PIP5K1C interaction, inhibits HGS ubiquitination and relieves LAPTM4B inhibition of EGFR degradation. Recruits SLC3A2 and SLC7A5 (the Leu transporter) to the lysosome, promoting entry of leucine and other essential amino acid (EAA) into the lysosome, stimulating activation of proton-transporting vacuolar (V)-ATPase protein pump (V-ATPase) and hence mTORC1 activation. Plays a role as negative regulator of TGFB1 production in regulatory T cells. Binds ceramide and facilitates its exit from late endosome in order to control cell death pathways. The polypeptide is Lysosomal-associated transmembrane protein 4B (Mus musculus (Mouse)).